Consider the following 476-residue polypeptide: Aspartyl/glutamyl-tRNA(Asn/Gln) amidotransferase subunit B (476 aa).

Belongs to the GatB/GatE family. GatB subfamily. Heterotrimer of A, B and C subunits.

It catalyses the reaction L-glutamyl-tRNA(Gln) + L-glutamine + ATP + H2O = L-glutaminyl-tRNA(Gln) + L-glutamate + ADP + phosphate + H(+). It carries out the reaction L-aspartyl-tRNA(Asn) + L-glutamine + ATP + H2O = L-asparaginyl-tRNA(Asn) + L-glutamate + ADP + phosphate + 2 H(+). Allows the formation of correctly charged Asn-tRNA(Asn) or Gln-tRNA(Gln) through the transamidation of misacylated Asp-tRNA(Asn) or Glu-tRNA(Gln) in organisms which lack either or both of asparaginyl-tRNA or glutaminyl-tRNA synthetases. The reaction takes place in the presence of glutamine and ATP through an activated phospho-Asp-tRNA(Asn) or phospho-Glu-tRNA(Gln). In Oceanobacillus iheyensis (strain DSM 14371 / CIP 107618 / JCM 11309 / KCTC 3954 / HTE831), this protein is Aspartyl/glutamyl-tRNA(Asn/Gln) amidotransferase subunit B.